The sequence spans 109 residues: Elongin-C (109 aa).

Belongs to the SKP1 family.

The protein localises to the nucleus. In terms of biological role, SIII, also known as elongin, is a general transcription elongation factor that increases the RNA polymerase II transcription elongation past template-encoded arresting sites. Subunit A is transcriptionally active and its transcription activity is strongly enhanced by binding to the dimeric complex of the SIII regulatory subunits B and C (elongin BC complex). Functionally, the elongin BC complex seems to be involved as an adapter protein in the proteasomal degradation of target proteins via different E3 ubiquitin ligase complexes. The protein is Elongin-C (tceb1) of Dictyostelium discoideum (Social amoeba).